We begin with the raw amino-acid sequence, 342 residues long: Glutamyl endopeptidase (342 aa).

The signal sequence occupies residues 1 to 29 (MKGKFLKVSSLFVATLTTATLVSSPAANA). Positions 30-68 (LSSKAMDNHPQQTQSSKQQTPKIKKGGNLKPLEQREHAN) are excised as a propeptide. The disordered stretch occupies residues 33–63 (KAMDNHPQQTQSSKQQTPKIKKGGNLKPLEQ). The segment covering 39 to 50 (PQQTQSSKQQTP) has biased composition (low complexity). Active-site charge relay system residues include His-119, Asp-161, and Ser-237. Residues 283-342 (FANDDQPNNPDNPDNPNNPDNPNNPDNPNNPDEPNNPDNPNNPDNPDNGDNNNSDNPDAA) are disordered. Low complexity predominate over residues 286–342 (DDQPNNPDNPDNPNNPDNPNNPDNPNNPDEPNNPDNPNNPDNPDNGDNNNSDNPDAA). 13 tandem repeats follow at residues 289-291 (PNN), 292-294 (PDN), 295-297 (PDN), 298-300 (PNN), 301-303 (PDN), 304-306 (PNN), 307-309 (PDN), 310-312 (PNN), 316-318 (PNN), 319-321 (PDN), 322-324 (PNN), 325-327 (PDN), and 328-330 (PDN). The tract at residues 289 to 330 (PNNPDNPDNPNNPDNPNNPDNPNNPDEPNNPDNPNNPDNPDN) is 13 X 3 AA repeats of P-[DN]-N.

This sequence belongs to the peptidase S1B family. Post-translationally, proteolytically cleaved by aureolysin (aur). This cleavage leads to the activation of SspA.

The protein resides in the secreted. The catalysed reaction is Preferential cleavage: Glu-|-Xaa, Asp-|-Xaa.. Its function is as follows. Preferentially cleaves peptide bonds on the carboxyl-terminal side of aspartate and glutamate. Along with other extracellular proteases it is involved in colonization and infection of human tissues. Required for proteolytic maturation of thiol protease SspB and inactivation of SspC, an inhibitor of SspB. It is the most important protease for degradation of fibronectin-binding protein (FnBP) and surface protein A, which are involved in adherence to host cells. May also protect bacteria against host defense mechanism by cleaving the immunoglobulin classes IgG, IgA and IgM. May be involved in the stability of secreted lipases. This Staphylococcus aureus (strain Mu50 / ATCC 700699) protein is Glutamyl endopeptidase (sspA).